Here is a 381-residue protein sequence, read N- to C-terminus: MQVTLQAQDGGARALSLKLAHSEVQTPVFMPVGTQGCVKALDSRDMSEILNAQIILVNTYHMYLRIGIERLKNFGGIARFAHFDRSYLSDSGGFQAFSLNKNAKVTNEGVAFKSHIDGSKHFFSPEYVLDIQYALNSDIMMVLDDLVGLPSSEERIADSIARTSDWAQKSLIYHQSQKARGLGLNNNLFAIIQGGVNEHFRTLCAKQLVDMGDFDGFAIGGLAVGETSEQMYKTISFTTPLMPVNKPRYLMGVGTPENIIESIALGVDMFDCVMPTRNARNATLFTHFGKINIKAAIFSNDQSPIDELCDCYTCQHFTRAYLCHLFRSQEMTYYRLASLHNLHYYLNLMREAREAILQGTFSAYRSSFYALREMEIPNNEY.

Catalysis depends on Asp90, which acts as the Proton acceptor. Residues 90 to 94 (DSGGF), Asp144, Gln193, and Gly221 each bind substrate. An RNA binding region spans residues 252–258 (GVGTPEN). Residue Asp271 is the Nucleophile of the active site. The segment at 276–280 (TRNAR) is RNA binding; important for wobble base 34 recognition. Cys309, Cys311, Cys314, and His340 together coordinate Zn(2+).

This sequence belongs to the queuine tRNA-ribosyltransferase family. In terms of assembly, homodimer. Within each dimer, one monomer is responsible for RNA recognition and catalysis, while the other monomer binds to the replacement base PreQ1. It depends on Zn(2+) as a cofactor.

It carries out the reaction 7-aminomethyl-7-carbaguanine + guanosine(34) in tRNA = 7-aminomethyl-7-carbaguanosine(34) in tRNA + guanine. The protein operates within tRNA modification; tRNA-queuosine biosynthesis. In terms of biological role, catalyzes the base-exchange of a guanine (G) residue with the queuine precursor 7-aminomethyl-7-deazaguanine (PreQ1) at position 34 (anticodon wobble position) in tRNAs with GU(N) anticodons (tRNA-Asp, -Asn, -His and -Tyr). Catalysis occurs through a double-displacement mechanism. The nucleophile active site attacks the C1' of nucleotide 34 to detach the guanine base from the RNA, forming a covalent enzyme-RNA intermediate. The proton acceptor active site deprotonates the incoming PreQ1, allowing a nucleophilic attack on the C1' of the ribose to form the product. After dissociation, two additional enzymatic reactions on the tRNA convert PreQ1 to queuine (Q), resulting in the hypermodified nucleoside queuosine (7-(((4,5-cis-dihydroxy-2-cyclopenten-1-yl)amino)methyl)-7-deazaguanosine). In Helicobacter hepaticus (strain ATCC 51449 / 3B1), this protein is Queuine tRNA-ribosyltransferase.